The following is a 208-amino-acid chain: 3-demethoxyubiquinol 3-hydroxylase (208 aa).

E57, E87, H90, E139, E171, and H174 together coordinate Fe cation.

This sequence belongs to the COQ7 family. Fe cation is required as a cofactor.

The protein resides in the cell membrane. It catalyses the reaction a 5-methoxy-2-methyl-3-(all-trans-polyprenyl)benzene-1,4-diol + AH2 + O2 = a 3-demethylubiquinol + A + H2O. It functions in the pathway cofactor biosynthesis; ubiquinone biosynthesis. In terms of biological role, catalyzes the hydroxylation of 2-nonaprenyl-3-methyl-6-methoxy-1,4-benzoquinol during ubiquinone biosynthesis. The sequence is that of 3-demethoxyubiquinol 3-hydroxylase from Burkholderia multivorans (strain ATCC 17616 / 249).